Reading from the N-terminus, the 334-residue chain is MAFNLRNRNFLKLLDFSTKEIQFLLELSAELKKAKYAGTEQKKLQGKNIALIFEKSSTRTRCAFEVAAFDQGAQVSYIGPSGSQIGHKESMKDTARVLGRMYDGIEYRGFGQSIVEELGTYASVPVWNGLTDEFHPTQILADFLTMKEHGRGKQLHNMTFAYLGDARNNMGNSLMVGAAKMGMDIRLVAPKAFWPEEALVATCQEIAQQTGAKITLTENVEEGVKGCDFLYTDVWVSMGESAEAWDERVALMTPYQINMDVIKQTGNPHVKFMHCLPAFHNDETTVGKEVAEKYGMKGLEVTEEVFESEYSIVFDEAENRMHTIKAVMVATLGS.

Residues 57–60 (STRT), Gln-84, Arg-108, and 135–138 (HPTQ) contribute to the carbamoyl phosphate site. L-ornithine-binding positions include Asn-169, Asp-233, and 237 to 238 (SM). Carbamoyl phosphate contacts are provided by residues 275 to 276 (CL) and Arg-320.

This sequence belongs to the aspartate/ornithine carbamoyltransferase superfamily. OTCase family.

Its subcellular location is the cytoplasm. It catalyses the reaction carbamoyl phosphate + L-ornithine = L-citrulline + phosphate + H(+). It participates in amino-acid biosynthesis; L-arginine biosynthesis; L-arginine from L-ornithine and carbamoyl phosphate: step 1/3. Its function is as follows. Reversibly catalyzes the transfer of the carbamoyl group from carbamoyl phosphate (CP) to the N(epsilon) atom of ornithine (ORN) to produce L-citrulline. This Vibrio campbellii (strain ATCC BAA-1116) protein is Ornithine carbamoyltransferase.